The sequence spans 340 residues: MSEKNAYAQSGVDVEAGYEVVERIKKHVARTERAGVMGALGGFGGMFDLSQTGVKEPVLISGTDGVGTKLMLAIKYDKHDTIGQDCVAMCVNDIIAAGAEPLYFLDYVATGKNEPAKLEQVVAGVAEGCVQASAALIGGETAEMPGMYGEDDYDLAGFAVGVAEKSQIIDGSKVKEGDILLGLASSGIHSNGYSLVRRVFADYTGDEVLPELEGKQLKDVLLEPTRIYVKAALPLIKEELVNGIAHITGGGFIENVPRMFADDLAAEIDEDKVPVLPIFKALEKYGDIKHEEMFEIFNMGVGLMLDVNPENVDRVKELLDEPVYEIGRIIKKADDSVVIK.

It belongs to the AIR synthase family.

The protein localises to the cytoplasm. It catalyses the reaction 2-formamido-N(1)-(5-O-phospho-beta-D-ribosyl)acetamidine + ATP = 5-amino-1-(5-phospho-beta-D-ribosyl)imidazole + ADP + phosphate + H(+). Its pathway is purine metabolism; IMP biosynthesis via de novo pathway; 5-amino-1-(5-phospho-D-ribosyl)imidazole from N(2)-formyl-N(1)-(5-phospho-D-ribosyl)glycinamide: step 2/2. This is Phosphoribosylformylglycinamidine cyclo-ligase from Streptococcus agalactiae serotype V (strain ATCC BAA-611 / 2603 V/R).